The following is a 346-amino-acid chain: Holliday junction branch migration complex subunit RuvB (346 aa).

Residues 1-11 (MTEQRTIASSA) are compositionally biased toward polar residues. The interval 1–20 (MTEQRTIASSATREDEAADA) is disordered. Residues 1-183 (MTEQRTIASS…FGIVQRLEFY (183 aa)) form a large ATPase domain (RuvB-L) region. ATP contacts are provided by residues isoleucine 22, arginine 23, glycine 64, lysine 67, threonine 68, threonine 69, 130-132 (EDF), arginine 173, tyrosine 183, and arginine 220. Threonine 68 provides a ligand contact to Mg(2+). The small ATPAse domain (RuvB-S) stretch occupies residues 184 to 254 (SPQELTRIVI…VAQAAMQMLK (71 aa)). The interval 257-346 (PEGFDELDRR…PAIGEPGDLF (90 aa)) is head domain (RuvB-H). DNA-binding residues include arginine 293, arginine 312, and arginine 317.

The protein belongs to the RuvB family. As to quaternary structure, homohexamer. Forms an RuvA(8)-RuvB(12)-Holliday junction (HJ) complex. HJ DNA is sandwiched between 2 RuvA tetramers; dsDNA enters through RuvA and exits via RuvB. An RuvB hexamer assembles on each DNA strand where it exits the tetramer. Each RuvB hexamer is contacted by two RuvA subunits (via domain III) on 2 adjacent RuvB subunits; this complex drives branch migration. In the full resolvosome a probable DNA-RuvA(4)-RuvB(12)-RuvC(2) complex forms which resolves the HJ.

The protein localises to the cytoplasm. It carries out the reaction ATP + H2O = ADP + phosphate + H(+). In terms of biological role, the RuvA-RuvB-RuvC complex processes Holliday junction (HJ) DNA during genetic recombination and DNA repair, while the RuvA-RuvB complex plays an important role in the rescue of blocked DNA replication forks via replication fork reversal (RFR). RuvA specifically binds to HJ cruciform DNA, conferring on it an open structure. The RuvB hexamer acts as an ATP-dependent pump, pulling dsDNA into and through the RuvAB complex. RuvB forms 2 homohexamers on either side of HJ DNA bound by 1 or 2 RuvA tetramers; 4 subunits per hexamer contact DNA at a time. Coordinated motions by a converter formed by DNA-disengaged RuvB subunits stimulates ATP hydrolysis and nucleotide exchange. Immobilization of the converter enables RuvB to convert the ATP-contained energy into a lever motion, pulling 2 nucleotides of DNA out of the RuvA tetramer per ATP hydrolyzed, thus driving DNA branch migration. The RuvB motors rotate together with the DNA substrate, which together with the progressing nucleotide cycle form the mechanistic basis for DNA recombination by continuous HJ branch migration. Branch migration allows RuvC to scan DNA until it finds its consensus sequence, where it cleaves and resolves cruciform DNA. The chain is Holliday junction branch migration complex subunit RuvB from Xanthomonas campestris pv. campestris (strain 8004).